Consider the following 243-residue polypeptide: Terpene cyclase penB (243 aa).

3 helical membrane-spanning segments follow: residues 19–39 (IANIFVLGMGLGWLINYVGMI), 48–68 (YGMAIMPLCCNIAWEIVYSLI), and 78–98 (GVFIAGLTINIGVMYAAIKFA). Asn-111 is a glycosylation site (N-linked (GlcNAc...) asparagine). The next 4 membrane-spanning stretches (helical) occupy residues 112-132 (LSLIFFLATLGFLTGHLALAA), 137-157 (SLAYSWGAVVCQLLLSVGGLC), 172-194 (LWLSRFLGSSCTVAFASLRWMYW), and 205-225 (LVLWSLALFLTVDGSYGLCYW).

The protein belongs to the paxB family.

The protein localises to the membrane. It participates in secondary metabolite biosynthesis. Its function is as follows. Terpene cyclase; part of the gene cluster that mediates the biosynthesis of the indole diterpenes penitrems. The geranylgeranyl diphosphate (GGPP) synthase penG catalyzes the first step in penitrem biosynthesis via conversion of farnesyl pyrophosphate and isopentyl pyrophosphate into geranylgeranyl pyrophosphate (GGPP). Condensation of indole-3-glycerol phosphate with GGPP by the prenyl transferase penC then forms 3-geranylgeranylindole (3-GGI). Epoxidation by the FAD-dependent monooxygenase penM leads to a epoxidized-GGI that is substrate of the terpene cyclase penB for cyclization to yield paspaline. Paspaline is subsequently converted to 13-desoxypaxilline by the cytochrome P450 monooxygenase penP, the latter being then converted to paxilline by the cytochrome P450 monooxygenase penQ. Paxilline is converted to beta-paxitriol via C-10 ketoreduction by the short-chain dehydrogenase PC-15 which can be monoprenylated at the C-20 by the indole diterpene prenyltransferase penD. A two-step elimination (acetylation and elimination) process performed by the O-acetyltransferase PC-16 and the P.simplicissimum ptmI-ortholog not yet identified in P.crustosum, leads to the production of the prenylated form of penijanthine. The FAD-linked oxidoreductase ptmO then converts the prenylated form of penijanthine into PC-M5 which is in turn transformed into PC-M4 by the aromatic dimethylallyltransferase PC-22. A series of oxidation steps involving 4 cytochrome P450 monooxygenases (PC-21, PC-05, PC-23, PC-20) and a FAD-dependent monooxygenase (PC-14) are required for the transformation of PC-M4 to penitrems A and E. Synthesis of these final products is proposed to proceed via penitrems D and C (PC-21, PC-05, PC-14) and penitrems B and F (PC-21, PC-05, PC-14, PC-23). The polypeptide is Terpene cyclase penB (penB) (Penicillium crustosum (Blue mold fungus)).